The following is a 621-amino-acid chain: Chaperone protein HscA homolog (621 aa).

Belongs to the heat shock protein 70 family.

Functionally, chaperone involved in the maturation of iron-sulfur cluster-containing proteins. Has a low intrinsic ATPase activity which is markedly stimulated by HscB. This chain is Chaperone protein HscA homolog, found in Polynucleobacter asymbioticus (strain DSM 18221 / CIP 109841 / QLW-P1DMWA-1) (Polynucleobacter necessarius subsp. asymbioticus).